Consider the following 373-residue polypeptide: MASQAHSLSYSGCNFLRQRLVLSTLSGRPVKIRKIRARDDNPGLRDFEASFIRLLDKVTNGSRIEINQTGTTLYYQPGLLYGGSMEHDCSVLRGIGYYLESLLCLAPFMKHPLRIVLRGVTNDQVDPSVDVLKATALPLLKQFGIDGESFELKVVRRGMPPGGGGEVFFSCPVRKVLKPIQLIDPGKIKRIRGMAYSVRVSPQMANRIVDSARSILNKFIPDIYIYTDHMKGINSGKSPGFGLSLVAETTNGTFLSAELASNPQGQGAAMLPEDLGRNCARLLLEEIYRGGCVDSTNQSLALLLMTLGQQDVSKVLLGPLSPYTIEFLRHLKSFFQIMFKIETKPCGEELKGGDKVLMTCVGIGFSNLSKTLK.

Belongs to the RNA 3'-terminal cyclase family. Type 2 subfamily. As to quaternary structure, part of the small subunit (SSU) processome, composed of more than 70 proteins and the RNA chaperone small nucleolar RNA (snoRNA) U3. Interacts with BMS1.

It is found in the nucleus. Its subcellular location is the nucleolus. As part of the small subunit (SSU) processome, it plays a role in 40S-ribosomal-subunit biogenesis in the early pre-rRNA processing steps at sites A0, A1 and A2 that are required for proper maturation of the 18S RNA. Activates BMS1 by promoting GDP/GTP exchange. Does not have cyclase activity. The polypeptide is RNA 3'-terminal phosphate cyclase-like protein (RCL1) (Bos taurus (Bovine)).